Consider the following 366-residue polypeptide: 8-hydroxyquercetin 8-O-methyltransferase (366 aa).

S-adenosyl-L-methionine is bound by residues Val-207 to Gly-210, Asp-231 to Leu-232, Asp-251 to Met-252, and Lys-265. His-269 functions as the Proton acceptor in the catalytic mechanism.

The protein belongs to the class I-like SAM-binding methyltransferase superfamily. Cation-independent O-methyltransferase family. COMT subfamily. In terms of assembly, homodimer.

It carries out the reaction 3,3',4',5,7,8-hexahydroxyflavone + S-adenosyl-L-methionine = 3,3',4',5,7-pentahydroxy-8-methoxyflavone + S-adenosyl-L-homocysteine + H(+). The enzyme catalyses 4',7,8-trihydroxyflavone + S-adenosyl-L-methionine = 4',7-dihydroxy-8-methoxyflavone + S-adenosyl-L-homocysteine + H(+). It catalyses the reaction 8-hydroxy-7-methoxyflavone + S-adenosyl-L-methionine = 7,8-dimethoxyflavone + S-adenosyl-L-homocysteine + H(+). It functions in the pathway flavonoid metabolism. Flavonoid 8-O-methyltransferase involved in the biosynthesis of polymethoxylated flavonoids natural products such as pebrellin, aroma compounds which contribute to the flavor of peppermint, and exhibit pharmacological activities such as anti-allergic, anti-oxidant, antibacterial, anti-proliferative, and anti-inflammatory effects. Catalyzes S-adenosylmethionine-dependent regioselective 8-O-methylation of flavonoids; active on various hydroxylated flavonoid substrates, including 7,8,3'4'-tetrahydroxy-flavone, 7,8,4'-trihydroxy-flavone and 8-hydroxy-flavone 7-methyl ether. The protein is 8-hydroxyquercetin 8-O-methyltransferase of Mentha piperita (Peppermint).